The following is a 705-amino-acid chain: Ribosomal RNA large subunit methyltransferase K/L (705 aa).

Positions 43–154 constitute a THUMP domain; that stretch reads VVYRCCLWSR…GEKGILGFDL (112 aa).

This sequence belongs to the methyltransferase superfamily. RlmKL family.

The protein localises to the cytoplasm. It catalyses the reaction guanosine(2445) in 23S rRNA + S-adenosyl-L-methionine = N(2)-methylguanosine(2445) in 23S rRNA + S-adenosyl-L-homocysteine + H(+). The catalysed reaction is guanosine(2069) in 23S rRNA + S-adenosyl-L-methionine = N(2)-methylguanosine(2069) in 23S rRNA + S-adenosyl-L-homocysteine + H(+). Specifically methylates the guanine in position 2445 (m2G2445) and the guanine in position 2069 (m7G2069) of 23S rRNA. This chain is Ribosomal RNA large subunit methyltransferase K/L, found in Aliivibrio salmonicida (strain LFI1238) (Vibrio salmonicida (strain LFI1238)).